Reading from the N-terminus, the 817-residue chain is Cargo-transport protein YPP1 (817 aa).

This sequence belongs to the YPP1 family. As to quaternary structure, interacts with STT4 and ribosomes.

The protein localises to the cytoplasmic granule. Its subcellular location is the cell membrane. Its function is as follows. Involved in endocytosis. The chain is Cargo-transport protein YPP1 (YPP1) from Saccharomyces cerevisiae (strain YJM789) (Baker's yeast).